We begin with the raw amino-acid sequence, 499 residues long: Probable inactive receptor-like protein kinase At3g56050 (499 aa).

Positions 1 to 31 (MSNNWKSVRLRLQNRTLVFLLVILSFGSCYS) are cleaved as a signal peptide. An N-linked (GlcNAc...) asparagine glycan is attached at asparagine 14. Residues 32-146 (LKSQGDGFLE…SKTSSNSTIP (115 aa)) are Extracellular-facing. Positions 80–121 (RDRPVARATPPSSSVSTRPDAKRSSTLPPPQKSPPAQHVSAP) are disordered. The N-linked (GlcNAc...) asparagine glycan is linked to asparagine 142. Residues 147-167 (IVAGCIAGAVFILLLATGVFF) traverse the membrane as a helical segment. The Cytoplasmic segment spans residues 168–499 (FKSKAGKSVN…WAELEVLSTA (332 aa)). A Protein kinase domain is found at 208-474 (EDFSNVIGSC…EVTGRLREIT (267 aa)).

It is found in the cell membrane. The protein is Probable inactive receptor-like protein kinase At3g56050 of Arabidopsis thaliana (Mouse-ear cress).